The chain runs to 501 residues: AKT kinase-transforming protein (501 aa).

One can recognise a PH domain in the interval 26-129 (AIVKEGWLHK…WATAIQTVAD (104 aa)). The tract at residues 135-158 (EEETMDFRSGSPSDNSGAEEMEVS) is disordered. The region spanning 171–429 (FEYLKLLGKG…AKEIMQHRFF (259 aa)) is the Protein kinase domain. ATP contacts are provided by residues 177–185 (LGKGTFGKV) and lysine 200. The active-site Proton acceptor is aspartate 295. Tyrosine 347 bears the Phosphotyrosine mark. Residues 430-501 (ANIVWQDVYE…QFSYSASGTA (72 aa)) form the AGC-kinase C-terminal domain. Positions 471-501 (TPPDQDDSMECVDSERRPHFPQFSYSASGTA) are disordered.

This sequence belongs to the protein kinase superfamily. AGC Ser/Thr protein kinase family. RAC subfamily. In terms of assembly, interacts with mouse THEM4. Autophosphorylated on threonine and serine residues.

It carries out the reaction L-seryl-[protein] + ATP = O-phospho-L-seryl-[protein] + ADP + H(+). It catalyses the reaction L-threonyl-[protein] + ATP = O-phospho-L-threonyl-[protein] + ADP + H(+). The chain is AKT kinase-transforming protein (V-AKT) from Mus musculus (Mouse).